A 267-amino-acid polypeptide reads, in one-letter code: tRNA pseudouridine synthase A (267 aa).

Aspartate 51 (nucleophile) is an active-site residue. Tyrosine 109 contributes to the substrate binding site.

It belongs to the tRNA pseudouridine synthase TruA family. As to quaternary structure, homodimer.

The enzyme catalyses uridine(38/39/40) in tRNA = pseudouridine(38/39/40) in tRNA. Its function is as follows. Formation of pseudouridine at positions 38, 39 and 40 in the anticodon stem and loop of transfer RNAs. The chain is tRNA pseudouridine synthase A from Staphylococcus carnosus (strain TM300).